A 377-amino-acid polypeptide reads, in one-letter code: MLEKSGSVAETFGIPLAVLLELTHRCPLQCPYCSNPLELERGGAELSTDEWKRVLSELARIGVLQVHFSGGEPTARKDLVELVRHATEVGLYTNLITSAVLLSRERLAALADAGLAHVQISFQGSEATIADRVGGFAGGHAKKLDVARWTRELDLPLTVNAVMHRQNLHLLPDIIELALALDADRLEVANVQYYGWALKNRAALMPTLAQIEDCTATVEAARERLKGQLAIDYVIPDYYAARPKKCMGGWGRQFFNISPSGKVLPCHAAETITGLDFPSVRNGASIAEIWRSAEAFNRYRGTGWMQQPCASCAFKEIDFGGCRCQAFALAGDAAATDPACALSPLHDRIFKTAEAEAASGSDRFLYRNFAGGTVEGA.

Positions 12–228 (FGIPLAVLLE…EAARERLKGQ (217 aa)) constitute a Radical SAM core domain. 3 residues coordinate [4Fe-4S] cluster: cysteine 26, cysteine 30, and cysteine 33.

This sequence belongs to the radical SAM superfamily. PqqE family. In terms of assembly, interacts with PqqD. The interaction is necessary for activity of PqqE. [4Fe-4S] cluster serves as cofactor.

The enzyme catalyses [PQQ precursor protein] + S-adenosyl-L-methionine = E-Y cross-linked-[PQQ precursor protein] + 5'-deoxyadenosine + L-methionine + H(+). It participates in cofactor biosynthesis; pyrroloquinoline quinone biosynthesis. Its function is as follows. Catalyzes the cross-linking of a glutamate residue and a tyrosine residue in the PqqA protein as part of the biosynthesis of pyrroloquinoline quinone (PQQ). In Rhodopseudomonas palustris (strain ATCC BAA-98 / CGA009), this protein is PqqA peptide cyclase.